The primary structure comprises 100 residues: Large ribosomal subunit protein eL21 (100 aa).

The tract at residues 1 to 21 is disordered; that stretch reads MVKRTHGYRYKSRKLLRKKPR.

This sequence belongs to the eukaryotic ribosomal protein eL21 family.

The sequence is that of Large ribosomal subunit protein eL21 from Pyrobaculum islandicum (strain DSM 4184 / JCM 9189 / GEO3).